Consider the following 262-residue polypeptide: MLTLYGETFPSRLLLGTAAYPTPEILKQSVRTARPAMITVSLRRTGCGGEAHGQGFWSLLQETGVPVLPNTAGCQSVQEAVTTAQMAREVFETDWIKLELIGDDDTLQPDVFQLVEAAEILIKDGFKVLPYCTEDLIACRRLLDAGCQALMPWAAPIGTGLGAVHAYALKILRERLPDTPLIIDAGLGLPSQAAQVMEWGFDGVLLNTAVSRSGDPVNMARAFALAVESGRLAFEAGPVEARTKAQASTPTVGQPFWHSAEY.

Residue K97 is the Schiff-base intermediate with DXP of the active site. Residues G158, 185–186 (AG), and 207–208 (NT) each bind 1-deoxy-D-xylulose 5-phosphate.

It belongs to the ThiG family. As to quaternary structure, homotetramer. Forms heterodimers with either ThiH or ThiS.

It localises to the cytoplasm. The enzyme catalyses [ThiS sulfur-carrier protein]-C-terminal-Gly-aminoethanethioate + 2-iminoacetate + 1-deoxy-D-xylulose 5-phosphate = [ThiS sulfur-carrier protein]-C-terminal Gly-Gly + 2-[(2R,5Z)-2-carboxy-4-methylthiazol-5(2H)-ylidene]ethyl phosphate + 2 H2O + H(+). The protein operates within cofactor biosynthesis; thiamine diphosphate biosynthesis. Catalyzes the rearrangement of 1-deoxy-D-xylulose 5-phosphate (DXP) to produce the thiazole phosphate moiety of thiamine. Sulfur is provided by the thiocarboxylate moiety of the carrier protein ThiS. In vitro, sulfur can be provided by H(2)S. The sequence is that of Thiazole synthase from Neisseria gonorrhoeae (strain ATCC 700825 / FA 1090).